Consider the following 483-residue polypeptide: (R)-mandelonitrile beta-glucosyltransferase (483 aa).

His22 functions as the Proton acceptor in the catalytic mechanism. His22 lines the an anthocyanidin pocket. Asp124 serves as the catalytic Charge relay. Positions 146, 363, 378, 381, 382, 383, and 386 each coordinate UDP-alpha-D-glucose. An anthocyanidin is bound at residue Ala401. Positions 402 and 403 each coordinate UDP-alpha-D-glucose.

It belongs to the UDP-glycosyltransferase family.

The enzyme catalyses (R)-mandelonitrile + UDP-alpha-D-glucose = (R)-prunasin + UDP + H(+). Functionally, involved in the biosynthesis of the cyanogenic glycoside (R)-prunasin, a precursor of (R)-amygdalin, which at high concentrations is associated with intense bitterness in kernels of almond. Stereo-selectively glucosylates (R)-mandelonitrile to produce (R)-prunasin. This chain is (R)-mandelonitrile beta-glucosyltransferase, found in Prunus dulcis (Almond).